Here is a 213-residue protein sequence, read N- to C-terminus: MNIFGKKSQTFKPKKNIQEGSKQYHLKQYAEATLGSGNLKSAVSLPTGEDINEWLAVNTTDFFNQINMLYGTITEFCTGTDCPVMSAGPKYEYHWADGTTVKKAIKVSAPEYVDFLMTWVQSQLDDENIFPSKIGVPFPKNFQSIVKTIFKRLFRVYAHIYHSHFQKIVSLGEEAHLNTSLKHFIYFIQEFNLVDKKELGPLNELIESLMKNP.

Zn(2+)-binding residues include Cys77, Cys82, His159, and His164.

The protein belongs to the MOB1/phocein family.

This is MOB kinase activator-like 1 homolog A (mobA) from Dictyostelium discoideum (Social amoeba).